The sequence spans 209 residues: Thymidine kinase (209 aa).

Residues 25–32 (GCMFAGKT) and 103–106 (DEVQ) each bind ATP. Glu-104 functions as the Proton acceptor in the catalytic mechanism. The Zn(2+) site is built by Cys-160, Cys-163, Cys-198, and Cys-201.

The protein belongs to the thymidine kinase family. In terms of assembly, homotetramer.

It localises to the cytoplasm. The catalysed reaction is thymidine + ATP = dTMP + ADP + H(+). The chain is Thymidine kinase from Mycoplasma mycoides subsp. mycoides SC (strain CCUG 32753 / NCTC 10114 / PG1).